The following is a 323-amino-acid chain: Lipoyl synthase (323 aa).

Residues 1-14 (MVTILDRTKPDDKR) show a composition bias toward basic and acidic residues. Residues 1–25 (MVTILDRTKPDDKRIRHPEKAHKPD) are disordered. Residues Cys-61, Cys-66, Cys-72, Cys-87, Cys-91, Cys-94, and Ser-300 each contribute to the [4Fe-4S] cluster site. A Radical SAM core domain is found at 73–289 (WEKKHATFMI…EDIAYTKGFL (217 aa)).

This sequence belongs to the radical SAM superfamily. Lipoyl synthase family. The cofactor is [4Fe-4S] cluster.

Its subcellular location is the cytoplasm. The catalysed reaction is [[Fe-S] cluster scaffold protein carrying a second [4Fe-4S](2+) cluster] + N(6)-octanoyl-L-lysyl-[protein] + 2 oxidized [2Fe-2S]-[ferredoxin] + 2 S-adenosyl-L-methionine + 4 H(+) = [[Fe-S] cluster scaffold protein] + N(6)-[(R)-dihydrolipoyl]-L-lysyl-[protein] + 4 Fe(3+) + 2 hydrogen sulfide + 2 5'-deoxyadenosine + 2 L-methionine + 2 reduced [2Fe-2S]-[ferredoxin]. It functions in the pathway protein modification; protein lipoylation via endogenous pathway; protein N(6)-(lipoyl)lysine from octanoyl-[acyl-carrier-protein]: step 2/2. Functionally, catalyzes the radical-mediated insertion of two sulfur atoms into the C-6 and C-8 positions of the octanoyl moiety bound to the lipoyl domains of lipoate-dependent enzymes, thereby converting the octanoylated domains into lipoylated derivatives. This Allorhizobium ampelinum (strain ATCC BAA-846 / DSM 112012 / S4) (Agrobacterium vitis (strain S4)) protein is Lipoyl synthase.